A 530-amino-acid polypeptide reads, in one-letter code: Structure-specific endonuclease subunit SLX1 homolog 2 (530 aa).

Residues 4–89 (RFHCVYLLTS…PTKSTRLKTQ (86 aa)) form the GIY-YIG domain. The SLX1-type zinc finger occupies 232–365 (CALCSLPLRS…PSQPCPCPLC (134 aa)). Disordered stretches follow at residues 276 to 306 (ATMG…MDAH), 410 to 438 (NSSL…YCGD), and 474 to 502 (LPPS…RMTD). A compositionally biased stretch (basic and acidic residues) spans 283–298 (RNERSGEYSNKIKDDS).

Belongs to the SLX1 family. In terms of assembly, forms a heterodimer with a member of the SLX4 family. It depends on a divalent metal cation as a cofactor.

The protein resides in the nucleus. Catalytic subunit of a heterodimeric structure-specific endonuclease that resolves DNA secondary structures generated during DNA repair and recombination. Has endonuclease activity towards branched DNA substrates, introducing single-strand cuts in duplex DNA close to junctions with ss-DNA. In Trypanosoma cruzi (strain CL Brener), this protein is Structure-specific endonuclease subunit SLX1 homolog 2.